We begin with the raw amino-acid sequence, 527 residues long: Peptide chain release factor 3 (527 aa).

Residues 9–277 (AKRRTFAIIS…AVVDWAPRPL (269 aa)) form the tr-type G domain. Residues 18-25 (SHPDAGKT), 86-90 (DTPGH), and 140-143 (NKLD) contribute to the GTP site.

The protein belongs to the TRAFAC class translation factor GTPase superfamily. Classic translation factor GTPase family. PrfC subfamily.

The protein localises to the cytoplasm. Functionally, increases the formation of ribosomal termination complexes and stimulates activities of RF-1 and RF-2. It binds guanine nucleotides and has strong preference for UGA stop codons. It may interact directly with the ribosome. The stimulation of RF-1 and RF-2 is significantly reduced by GTP and GDP, but not by GMP. In Pseudomonas fluorescens (strain SBW25), this protein is Peptide chain release factor 3.